We begin with the raw amino-acid sequence, 162 residues long: Phosphopantetheine adenylyltransferase (162 aa).

Serine 9 serves as a coordination point for substrate. Residues 9–10 (SF) and histidine 17 contribute to the ATP site. The substrate site is built by lysine 41, leucine 73, and lysine 87. ATP is bound by residues 88–90 (GLR), glutamate 98, and 122–128 (YSFLSSS).

The protein belongs to the bacterial CoaD family. As to quaternary structure, homohexamer. Requires Mg(2+) as cofactor.

Its subcellular location is the cytoplasm. The enzyme catalyses (R)-4'-phosphopantetheine + ATP + H(+) = 3'-dephospho-CoA + diphosphate. It participates in cofactor biosynthesis; coenzyme A biosynthesis; CoA from (R)-pantothenate: step 4/5. Functionally, reversibly transfers an adenylyl group from ATP to 4'-phosphopantetheine, yielding dephospho-CoA (dPCoA) and pyrophosphate. In Salinispora tropica (strain ATCC BAA-916 / DSM 44818 / JCM 13857 / NBRC 105044 / CNB-440), this protein is Phosphopantetheine adenylyltransferase.